The primary structure comprises 264 residues: MLLTIDVGNTFTVAGVFEGQNLLAEWTVTTDPNRTMDEYGMLFTQLMARAGFSSGQVTAVAIASSVPPLVPTLEWMCQKYFNLKPLVVGPGVRTGMMIRYDNPREVGADRIVGAVAAFDKYGGPLIVVDFSTAIILDAISARGEYLGGVIAPGIVVSADALFQFAAKLPRVELVRPPRALARNTVHAMQSGIIFGFASLVDDLVERMMAELDPEGKGCKVVATGEQAELLAGECATIQYCDPSLTLTGLRIIYERHQAHARGGR.

An ATP-binding site is contributed by 6 to 13 (DVGNTFTV). Substrate is bound by residues Tyr100 and 107-110 (GADR). Catalysis depends on Asp109, which acts as the Proton acceptor. Asp129 contributes to the K(+) binding site. An ATP-binding site is contributed by Thr132. Thr184 is a binding site for substrate.

It belongs to the type III pantothenate kinase family. Homodimer. NH4(+) serves as cofactor. The cofactor is K(+).

The protein localises to the cytoplasm. It carries out the reaction (R)-pantothenate + ATP = (R)-4'-phosphopantothenate + ADP + H(+). It functions in the pathway cofactor biosynthesis; coenzyme A biosynthesis; CoA from (R)-pantothenate: step 1/5. In terms of biological role, catalyzes the phosphorylation of pantothenate (Pan), the first step in CoA biosynthesis. The protein is Type III pantothenate kinase 2 of Symbiobacterium thermophilum (strain DSM 24528 / JCM 14929 / IAM 14863 / T).